The chain runs to 518 residues: Hyccin (518 aa).

Disordered regions lie at residues 385–410 and 466–492; these read GLRRLTGRSSKEKDKEKDAATGMDQL and VFSGNQPSSRASSPTSNHVAEQDEGVA. Over residues 393–403 the composition is skewed to basic and acidic residues; the sequence is SSKEKDKEKDA. Polar residues predominate over residues 466 to 484; sequence VFSGNQPSSRASSPTSNHV.

It belongs to the Hyccin family. As to quaternary structure, component of a phosphatidylinositol 4-kinase (PI4K) complex.

It is found in the cytoplasm. It localises to the cytosol. The protein resides in the cell membrane. Functionally, component of a complex required to localize phosphatidylinositol 4-kinase (PI4K) to the plasma membrane. The complex acts as a regulator of phosphatidylinositol 4-phosphate (PtdIns(4)P) synthesis. The polypeptide is Hyccin (hycc1) (Danio rerio (Zebrafish)).